Here is a 1112-residue protein sequence, read N- to C-terminus: MPRRTDLRHVLVIGSGPILIGQAAEFDYSGTQACRVLRAEGLTVTLINSNPATIMTDPEYADYTYVEPITPDFVERVIAQQAERGNKIDALLATLGGQTALNTAVALSENGVLERYDVELIGADFDAIQRGEDRQRFKDIVTKVGGESAKSRVCFTMEEVRETVGELGLPVVVRPSFTMGGLGSGMAYSAEDVERMAGHGLASSPSANVLIEESIFGWKEYELELMRDRHDNVVVVCSIENFDPMGVHTGDSVTVAPAMTLTDREYQTMRDLGIAILREVGVATGGCNIQFAVNPKDGRLIVIEMNPRVSRSSALASKATGFPIAKIAAKLAIGYTLDEILNDITKETPACFEPTLDYVVVKAPRFAFEKFPGADATLTTTMKSVGEAMSLGRNFIEALGKVMRSLETGRAGFWTAPDPIATVDEVLENLRTPTDGRLYDIEFALRLGASVEQVAEASGVDPWFVDQIAGLVALRTELLDAPVLDGTLLRRAKNSGLSDRQIAALRPELAGEVGVRALRQRLGIHPVFKTVDTCAAEFEAKTPYHYSSYELDPAAESEVAPQAERPKVLILGSGPNRIGQGIEFDYSCVHAATTLSEAGFETVMINCNPETVSTDYDTADRLYFEPLTFEDVLEIYYAESASGAGGPGVAGVIVQLGGQTPLGLAERLEQAGVPIVGTSPKAIDLAEDRGAFGEVLRTAGLPAPRFGLATTFDQARRIAADIGYPVLVRPSYVLGGRGMEIVYDEQTLEGYITRATQLSPEHPVLVDRFLEDAIEIDVDALCDGTEVYIGGIMEHIEEAGIHSGDSACALPPVTLGRSDIESVRRATEAIAHGVGVVGLLNVQYALKDDVLYVLEANPRASRTVPFVSKATAVPLAKACARIMLGASIAQLREEGVLAATGDGATTARNAPVAVKEAVLPFHRFRKADGAQIDSLLGPEMKSTGEVMGIDHDFGSAFAKSQTAAYGSLPSEGTVFVSVANRDKRSLVFPVKRLADLGFKVLATEGTAEMLRRNGIPCDEVRKHFEEPGAGRPARSAVEAIRAGDVAMVINTPYGNSGPRIDGYEIRSAAVSMNIPCITTVQGASAAVQGIEASLRGDIGVMSLQELHSELGN.

Positions 1–407 (MPRRTDLRHV…ALGKVMRSLE (407 aa)) are carboxyphosphate synthetic domain. 12 residues coordinate ATP: Arg134, Arg174, Gly180, Gly181, Glu213, Ile215, Glu220, Gly246, Val247, His248, Gln290, and Glu304. Residues 138 to 333 (KDIVTKVGGE…IAKIAAKLAI (196 aa)) form the ATP-grasp 1 domain. Residues Gln290, Glu304, and Asn306 each contribute to the Mg(2+) site. 3 residues coordinate Mn(2+): Gln290, Glu304, and Asn306. Positions 408–559 (TGRAGFWTAP…ELDPAAESEV (152 aa)) are oligomerization domain. The carbamoyl phosphate synthetic domain stretch occupies residues 560–965 (APQAERPKVL…AFAKSQTAAY (406 aa)). The 192-residue stretch at 693-884 (GEVLRTAGLP…LAKACARIML (192 aa)) folds into the ATP-grasp 2 domain. The ATP site is built by Arg729, Arg768, Leu770, Glu775, Gly800, Ile801, His802, Ser803, Gln843, and Glu855. Residues Gln843, Glu855, and Asn857 each contribute to the Mg(2+) site. Gln843, Glu855, and Asn857 together coordinate Mn(2+). In terms of domain architecture, MGS-like spans 966-1112 (GSLPSEGTVF…LQELHSELGN (147 aa)). Residues 966-1112 (GSLPSEGTVF…LQELHSELGN (147 aa)) are allosteric domain.

This sequence belongs to the CarB family. Composed of two chains; the small (or glutamine) chain promotes the hydrolysis of glutamine to ammonia, which is used by the large (or ammonia) chain to synthesize carbamoyl phosphate. Tetramer of heterodimers (alpha,beta)4. Requires Mg(2+) as cofactor. Mn(2+) is required as a cofactor.

It carries out the reaction hydrogencarbonate + L-glutamine + 2 ATP + H2O = carbamoyl phosphate + L-glutamate + 2 ADP + phosphate + 2 H(+). The catalysed reaction is hydrogencarbonate + NH4(+) + 2 ATP = carbamoyl phosphate + 2 ADP + phosphate + 2 H(+). The protein operates within amino-acid biosynthesis; L-arginine biosynthesis; carbamoyl phosphate from bicarbonate: step 1/1. It participates in pyrimidine metabolism; UMP biosynthesis via de novo pathway; (S)-dihydroorotate from bicarbonate: step 1/3. Large subunit of the glutamine-dependent carbamoyl phosphate synthetase (CPSase). CPSase catalyzes the formation of carbamoyl phosphate from the ammonia moiety of glutamine, carbonate, and phosphate donated by ATP, constituting the first step of 2 biosynthetic pathways, one leading to arginine and/or urea and the other to pyrimidine nucleotides. The large subunit (synthetase) binds the substrates ammonia (free or transferred from glutamine from the small subunit), hydrogencarbonate and ATP and carries out an ATP-coupled ligase reaction, activating hydrogencarbonate by forming carboxy phosphate which reacts with ammonia to form carbamoyl phosphate. This Mycobacterium sp. (strain JLS) protein is Carbamoyl phosphate synthase large chain.